The following is a 254-amino-acid chain: Photosystem II 22 kDa protein 2, chloroplastic (254 aa).

The transit peptide at 1-38 directs the protein to the chloroplast; the sequence is MALQQSMAMPMMVVSGLGTAPRSSPMVQLQRMKKHLVV. Tandem repeats lie at residues 42–148 and 149–253. A run of 4 helical transmembrane segments spans residues 86 to 106, 120 to 140, 184 to 204, and 219 to 239; these read VAMLGFAASLLGEAVTGKGIL, AEPLLLFFILFTLLGAIGALG, LFVGRLAQLGIAFSLIGEIIT, and PINEIEPLLLFNILFFFFAAI.

Belongs to the ELIP/psbS family.

The protein resides in the plastid. It localises to the chloroplast thylakoid membrane. Involved in high light-mediated energy-dependent nonphotochemical quenching (NPQ, qE) and thermal dissipation (TD) thus regulating energy conversion in photosystem II and protecting from photoinhibition. Also seems to regulate quantum yield of electron transport in fluctuating light conditions. The protein is Photosystem II 22 kDa protein 2, chloroplastic of Oryza sativa subsp. indica (Rice).